A 355-amino-acid chain; its full sequence is NADH dehydrogenase [ubiquinone] 1 alpha subcomplex subunit 10, mitochondrial (355 aa).

Residues 1 to 35 (MALRLLKLAATSASARVVAAGAQRVRGIHSSVQCK) constitute a mitochondrion transit peptide. S250 carries the post-translational modification Phosphoserine; by PINK1. K285 is modified (N6-succinyllysine).

The protein belongs to the complex I NDUFA10 subunit family. In terms of assembly, complex I is composed of 45 different subunits. This a component of the hydrophobic protein fraction. It depends on FAD as a cofactor. Post-translationally, phosphorylation at Ser-250 by PINK1 is required for the binding and/or reduction of the complex I substrate ubiquinone.

It localises to the mitochondrion matrix. Accessory subunit of the mitochondrial membrane respiratory chain NADH dehydrogenase (Complex I), that is believed not to be involved in catalysis. Complex I functions in the transfer of electrons from NADH to the respiratory chain. The immediate electron acceptor for the enzyme is believed to be ubiquinone. The protein is NADH dehydrogenase [ubiquinone] 1 alpha subcomplex subunit 10, mitochondrial (NDUFA10) of Homo sapiens (Human).